The primary structure comprises 122 residues: Large ribosomal subunit protein uL18 (122 aa).

Belongs to the universal ribosomal protein uL18 family. In terms of assembly, part of the 50S ribosomal subunit; part of the 5S rRNA/L5/L18/L25 subcomplex. Contacts the 5S and 23S rRNAs.

In terms of biological role, this is one of the proteins that bind and probably mediate the attachment of the 5S RNA into the large ribosomal subunit, where it forms part of the central protuberance. This is Large ribosomal subunit protein uL18 from Prochlorococcus marinus (strain MIT 9301).